We begin with the raw amino-acid sequence, 466 residues long: 3-isopropylmalate dehydratase large subunit (466 aa).

Positions 347, 407, and 410 each coordinate [4Fe-4S] cluster.

The protein belongs to the aconitase/IPM isomerase family. LeuC type 1 subfamily. In terms of assembly, heterodimer of LeuC and LeuD. [4Fe-4S] cluster serves as cofactor.

It catalyses the reaction (2R,3S)-3-isopropylmalate = (2S)-2-isopropylmalate. It participates in amino-acid biosynthesis; L-leucine biosynthesis; L-leucine from 3-methyl-2-oxobutanoate: step 2/4. Functionally, catalyzes the isomerization between 2-isopropylmalate and 3-isopropylmalate, via the formation of 2-isopropylmaleate. This chain is 3-isopropylmalate dehydratase large subunit, found in Shewanella loihica (strain ATCC BAA-1088 / PV-4).